We begin with the raw amino-acid sequence, 345 residues long: Ubiquitin-associated domain-containing protein 2 (345 aa).

The first 39 residues, 1-39 (MFTSTGSSGLYKAPLSKSLLLVPSALSLLLTLLLPHCQK), serve as a signal peptide directing secretion. Residues 40–91 (FFVYDLHAVKHDLQIWRLICGRIICLDLKDAFCSGLLIYNFRIFERRYGSRK) lie on the Extracellular side of the membrane. A helical membrane pass occupies residues 92–112 (FASFLLGSWVLSALFDFILVE). Residues 113 to 125 (AVQYSLGVTVASN) are Cytoplasmic-facing. A helical membrane pass occupies residues 126 to 146 (LPSGFLAPVFALFVPFHCSIP). Residues 147–163 (RVQVAQILGPLSITNKT) lie on the Extracellular side of the membrane. Residue N161 is glycosylated (N-linked (GlcNAc...) asparagine). Residues 164-184 (LIYILGLQLFTSGSYIWIVAM) form a helical membrane-spanning segment. Residues 185–345 (SGLISGMCYD…NVATNFLLQH (161 aa)) lie on the Cytoplasmic side of the membrane. The segment at 287 to 306 (NINYQDGPRSEQRASPPLEV) is disordered. Residues 305–345 (EVSEEQVARLMEMGFSRGDALEALRASNNDLNVATNFLLQH) enclose the UBA domain.

In terms of assembly, interacts with LMBR1L, FAF2, AMFR and VCP.

The protein localises to the endoplasmic reticulum membrane. Functionally, restricts trafficking of FAF2 from the endoplasmic reticulum to lipid droplets. In association with LMBR1L and E3 ubiquitin-protein ligase AMFR, negatively regulates the canonical Wnt signaling pathway in the lymphocytes by promoting the ubiquitin-mediated degradation of CTNNB1 and Wnt receptors FZD6 and LRP6. This Mus musculus (Mouse) protein is Ubiquitin-associated domain-containing protein 2 (Ubac2).